A 381-amino-acid polypeptide reads, in one-letter code: Creatine kinase M-type (381 aa).

A Phosphagen kinase N-terminal domain is found at lysine 11–glycine 98. The region spanning tyrosine 125–leucine 367 is the Phosphagen kinase C-terminal domain. Serine 128–arginine 132 is a binding site for ATP. Serine 164 bears the Phosphoserine mark. Threonine 166 carries the phosphothreonine modification. The residue at position 178 (serine 178) is a Phosphoserine. The residue at position 180 (threonine 180) is a Phosphothreonine. Histidine 191 serves as a coordination point for ATP. Serine 199 carries the post-translational modification Phosphoserine. The ATP site is built by arginine 236 and arginine 292. Phosphothreonine is present on residues threonine 313 and threonine 322. ATP contacts are provided by residues arginine 320–valine 325 and aspartate 335. The residue at position 372 (serine 372) is a Phosphoserine.

The protein belongs to the ATP:guanido phosphotransferase family. In terms of assembly, dimer of identical or non-identical chains, which can be either B (brain type) or M (muscle type). With MM being the major form in skeletal muscle and myocardium, MB existing in myocardium, and BB existing in many tissues, especially brain.

It localises to the cytoplasm. The enzyme catalyses creatine + ATP = N-phosphocreatine + ADP + H(+). Reversibly catalyzes the transfer of phosphate between ATP and various phosphogens (e.g. creatine phosphate). Creatine kinase isoenzymes play a central role in energy transduction in tissues with large, fluctuating energy demands, such as skeletal muscle, heart, brain and spermatozoa. The protein is Creatine kinase M-type (CKM) of Bos taurus (Bovine).